The chain runs to 134 residues: Two-component response regulator ORR5 (134 aa).

Residues 16–133 form the Response regulatory domain; that stretch reads HVLAVDDSSV…DVSRLCSRVL (118 aa). At aspartate 66 the chain carries 4-aspartylphosphate.

This sequence belongs to the ARR family. Type-A subfamily. In terms of processing, two-component system major event consists of a His-to-Asp phosphorelay between a sensor histidine kinase (HK) and a response regulator (RR). In plants, the His-to-Asp phosphorelay involves an additional intermediate named Histidine-containing phosphotransfer protein (HPt). This multistep phosphorelay consists of a His-Asp-His-Asp sequential transfer of a phosphate group between first a His and an Asp of the HK protein, followed by the transfer to a conserved His of the HPt protein and finally the transfer to an Asp in the receiver domain of the RR protein. In terms of tissue distribution, expressed in mature leaves and shoots, and at low levels in roots and flowers.

Functions as a response regulator involved in His-to-Asp phosphorelay signal transduction system. Phosphorylation of the Asp residue in the receiver domain activates the ability of the protein to promote the transcription of target genes. Type-A response regulators seem to act as negative regulators of the cytokinin signaling. The polypeptide is Two-component response regulator ORR5 (Oryza sativa subsp. indica (Rice)).